A 106-amino-acid chain; its full sequence is Large ribosomal subunit protein eL42 (106 aa).

Belongs to the eukaryotic ribosomal protein eL42 family.

The sequence is that of Large ribosomal subunit protein eL42 (RPL44) from Meyerozyma guilliermondii (strain ATCC 6260 / CBS 566 / DSM 6381 / JCM 1539 / NBRC 10279 / NRRL Y-324) (Yeast).